Reading from the N-terminus, the 139-residue chain is MLIPKRTKYRKQHRPVRSGMSKGGNEINFGDFGIQSLAPAYVTNRQIEAARIAMTRYIKRGGRVWITIFPDRPLTKHPLGARMGSGKGAPEFWIANVRPGRVMFEIGGVSEDVAKEALRRAIDKLPMKCRIIAREGGDI.

Residues 1-16 show a composition bias toward basic residues; it reads MLIPKRTKYRKQHRPV. Residues 1-22 form a disordered region; the sequence is MLIPKRTKYRKQHRPVRSGMSK.

The protein belongs to the universal ribosomal protein uL16 family. In terms of assembly, part of the 50S ribosomal subunit.

Functionally, binds 23S rRNA and is also seen to make contacts with the A and possibly P site tRNAs. This Bifidobacterium longum subsp. infantis (strain ATCC 15697 / DSM 20088 / JCM 1222 / NCTC 11817 / S12) protein is Large ribosomal subunit protein uL16.